A 543-amino-acid polypeptide reads, in one-letter code: Glutamyl-tRNA(Gln) amidotransferase subunit A, chloroplastic/mitochondrial (543 aa).

Residues K123 and S198 each act as charge relay system in the active site. S222 serves as the catalytic Acyl-ester intermediate.

The protein belongs to the amidase family. GatA subfamily. In terms of assembly, subunit of the heterotrimeric GatCAB amidotransferase (AdT) complex, composed of A, B and C subunits.

Its subcellular location is the mitochondrion. It localises to the plastid. The protein resides in the chloroplast stroma. It catalyses the reaction L-glutamyl-tRNA(Gln) + L-glutamine + ATP + H2O = L-glutaminyl-tRNA(Gln) + L-glutamate + ADP + phosphate + H(+). In terms of biological role, allows the formation of correctly charged Gln-tRNA(Gln) through the transamidation of misacylated Glu-tRNA(Gln) in chloroplasts and mitochondria. The reaction takes place in the presence of glutamine and ATP through an activated gamma-phospho-Glu-tRNA(Gln). The chain is Glutamyl-tRNA(Gln) amidotransferase subunit A, chloroplastic/mitochondrial from Oryza sativa subsp. japonica (Rice).